We begin with the raw amino-acid sequence, 388 residues long: D-alanyl-D-alanine carboxypeptidase DacD (388 aa).

The signal sequence occupies residues Met1–Ala21. Ser63 functions as the Acyl-ester intermediate in the catalytic mechanism. Lys66 (proton acceptor) is an active-site residue. Ser129 is a catalytic residue. Lys232 contacts substrate.

It belongs to the peptidase S11 family.

The protein resides in the cell inner membrane. It catalyses the reaction Preferential cleavage: (Ac)2-L-Lys-D-Ala-|-D-Ala. Also transpeptidation of peptidyl-alanyl moieties that are N-acyl substituents of D-alanine.. It functions in the pathway cell wall biogenesis; peptidoglycan biosynthesis. Its function is as follows. Removes C-terminal D-alanyl residues from sugar-peptide cell wall precursors. The chain is D-alanyl-D-alanine carboxypeptidase DacD (dacD) from Escherichia coli (strain K12).